We begin with the raw amino-acid sequence, 205 residues long: RNA pyrophosphohydrolase (205 aa).

Residues 6–149 (GFRPNVGIVL…KRGVYARALR (144 aa)) form the Nudix hydrolase domain. The Nudix box motif lies at 38-59 (GGMNTDETPVEAMYRELREETG). Positions 177–205 (PGSSAAGHDSPRKRPRKRSGARPMRINND) are disordered. Over residues 187 to 196 (PRKRPRKRSG) the composition is skewed to basic residues.

The protein belongs to the Nudix hydrolase family. RppH subfamily. A divalent metal cation serves as cofactor.

Its function is as follows. Accelerates the degradation of transcripts by removing pyrophosphate from the 5'-end of triphosphorylated RNA, leading to a more labile monophosphorylated state that can stimulate subsequent ribonuclease cleavage. This is RNA pyrophosphohydrolase from Xanthomonas oryzae pv. oryzae (strain MAFF 311018).